The primary structure comprises 143 residues: Small ribosomal subunit protein bS6 (143 aa).

A disordered region spans residues 95-143 (GPDTEQSFIMKSKDDKGDKPERRRRDDDENGDVGVSNDSDNDGGNAEAA). Over residues 105–121 (KSKDDKGDKPERRRRDD) the composition is skewed to basic and acidic residues.

This sequence belongs to the bacterial ribosomal protein bS6 family.

Its function is as follows. Binds together with bS18 to 16S ribosomal RNA. This is Small ribosomal subunit protein bS6 from Xylella fastidiosa (strain M23).